The following is a 289-amino-acid chain: ATP phosphoribosyltransferase (289 aa).

The protein belongs to the ATP phosphoribosyltransferase family. Long subfamily. It depends on Mg(2+) as a cofactor.

The protein resides in the cytoplasm. The catalysed reaction is 1-(5-phospho-beta-D-ribosyl)-ATP + diphosphate = 5-phospho-alpha-D-ribose 1-diphosphate + ATP. The protein operates within amino-acid biosynthesis; L-histidine biosynthesis; L-histidine from 5-phospho-alpha-D-ribose 1-diphosphate: step 1/9. With respect to regulation, feedback inhibited by histidine. Functionally, catalyzes the condensation of ATP and 5-phosphoribose 1-diphosphate to form N'-(5'-phosphoribosyl)-ATP (PR-ATP). Has a crucial role in the pathway because the rate of histidine biosynthesis seems to be controlled primarily by regulation of HisG enzymatic activity. In Methanosarcina acetivorans (strain ATCC 35395 / DSM 2834 / JCM 12185 / C2A), this protein is ATP phosphoribosyltransferase.